Reading from the N-terminus, the 396-residue chain is Phosphopentomutase (396 aa).

Mn(2+) contacts are provided by aspartate 13, aspartate 288, histidine 293, aspartate 329, histidine 330, and histidine 341.

It belongs to the phosphopentomutase family. The cofactor is Mn(2+).

It is found in the cytoplasm. It carries out the reaction 2-deoxy-alpha-D-ribose 1-phosphate = 2-deoxy-D-ribose 5-phosphate. The enzyme catalyses alpha-D-ribose 1-phosphate = D-ribose 5-phosphate. It functions in the pathway carbohydrate degradation; 2-deoxy-D-ribose 1-phosphate degradation; D-glyceraldehyde 3-phosphate and acetaldehyde from 2-deoxy-alpha-D-ribose 1-phosphate: step 1/2. Isomerase that catalyzes the conversion of deoxy-ribose 1-phosphate (dRib-1-P) and ribose 1-phosphate (Rib-1-P) to deoxy-ribose 5-phosphate (dRib-5-P) and ribose 5-phosphate (Rib-5-P), respectively. The polypeptide is Phosphopentomutase (Clostridium botulinum (strain Alaska E43 / Type E3)).